Reading from the N-terminus, the 497-residue chain is Aspartyl/glutamyl-tRNA(Asn/Gln) amidotransferase subunit B (497 aa).

The protein belongs to the GatB/GatE family. GatB subfamily. Heterotrimer of A, B and C subunits.

It catalyses the reaction L-glutamyl-tRNA(Gln) + L-glutamine + ATP + H2O = L-glutaminyl-tRNA(Gln) + L-glutamate + ADP + phosphate + H(+). The catalysed reaction is L-aspartyl-tRNA(Asn) + L-glutamine + ATP + H2O = L-asparaginyl-tRNA(Asn) + L-glutamate + ADP + phosphate + 2 H(+). Functionally, allows the formation of correctly charged Asn-tRNA(Asn) or Gln-tRNA(Gln) through the transamidation of misacylated Asp-tRNA(Asn) or Glu-tRNA(Gln) in organisms which lack either or both of asparaginyl-tRNA or glutaminyl-tRNA synthetases. The reaction takes place in the presence of glutamine and ATP through an activated phospho-Asp-tRNA(Asn) or phospho-Glu-tRNA(Gln). The polypeptide is Aspartyl/glutamyl-tRNA(Asn/Gln) amidotransferase subunit B (Rhodopirellula baltica (strain DSM 10527 / NCIMB 13988 / SH1)).